The chain runs to 259 residues: MKRISLIALVTLMSGCTMLEPIETPEVVNATTVVDAVEGDKSKDESSGIVDTLRGRSDPVAGDPAWAPIHPKQQPEHYAAETGSLFSVNHLSNLYDDSKPRGVGDIITVTLDEKTNASKSANADLSKSNDSSMDPLEVGGQELKIDGKYNFSYNLTNSNNFTGDASAKQSNSISGYITVEVIEVLANGNLVIRGEKWLTLNTGDEYIRLSGTIRPDDISFDNTIASNRVSNARIQYSGTGTQQDMQEPGFLARFFNVSL.

The first 15 residues, Met-1–Gly-15, serve as a signal peptide directing secretion. Cys-16 carries N-palmitoyl cysteine lipidation. Residue Cys-16 is the site of S-diacylglycerol cysteine attachment.

It belongs to the FlgH family. As to quaternary structure, the basal body constitutes a major portion of the flagellar organelle and consists of four rings (L,P,S, and M) mounted on a central rod.

The protein localises to the cell outer membrane. The protein resides in the bacterial flagellum basal body. Assembles around the rod to form the L-ring and probably protects the motor/basal body from shearing forces during rotation. The protein is Flagellar L-ring protein of Vibrio vulnificus (strain YJ016).